The primary structure comprises 191 residues: GDP-mannose pyrophosphatase (191 aa).

Residues Tyr17, 38-40 (KRE), Arg67, and 85-87 (AGL) contribute to the GDP-alpha-D-mannose site. A Nudix hydrolase domain is found at 43–180 (DRGNGATILL…EIRDGKTVLL (138 aa)). Mg(2+) contacts are provided by Ala85, Glu100, and Glu104. Residues 86 to 106 (GLLDNDEPEVCIRKEAIEETG) carry the Nudix box motif. Residues Glu104, Glu127, 150 to 151 (DE), and Lys176 each bind GDP-alpha-D-mannose. Glu151 serves as a coordination point for Mg(2+).

The protein belongs to the Nudix hydrolase family. NudK subfamily. As to quaternary structure, homodimer. Requires Mg(2+) as cofactor.

It carries out the reaction GDP-alpha-D-mannose + H2O = alpha-D-mannose 1-phosphate + GMP + 2 H(+). Functionally, nucleoside diphosphate sugar hydrolase that hydrolyzes GDP-mannose as its preferred substrate, yielding GMP and mannose-1-phosphate. This chain is GDP-mannose pyrophosphatase (nudK), found in Salmonella typhi.